We begin with the raw amino-acid sequence, 306 residues long: tRNA dimethylallyltransferase (306 aa).

Glycine 12–serine 19 lines the ATP pocket. Residue threonine 14–serine 19 participates in substrate binding.

This sequence belongs to the IPP transferase family. Monomer. Requires Mg(2+) as cofactor.

It catalyses the reaction adenosine(37) in tRNA + dimethylallyl diphosphate = N(6)-dimethylallyladenosine(37) in tRNA + diphosphate. Its function is as follows. Catalyzes the transfer of a dimethylallyl group onto the adenine at position 37 in tRNAs that read codons beginning with uridine, leading to the formation of N6-(dimethylallyl)adenosine (i(6)A). This is tRNA dimethylallyltransferase from Desulfatibacillum aliphaticivorans.